The primary structure comprises 92 residues: PqqA binding protein (92 aa).

It belongs to the PqqD family. Monomer. Interacts with PqqE.

It participates in cofactor biosynthesis; pyrroloquinoline quinone biosynthesis. In terms of biological role, functions as a PqqA binding protein and presents PqqA to PqqE, in the pyrroloquinoline quinone (PQQ) biosynthetic pathway. The sequence is that of PqqA binding protein from Pseudomonas paraeruginosa (strain DSM 24068 / PA7) (Pseudomonas aeruginosa (strain PA7)).